The following is a 301-amino-acid chain: Indole-3-glycerol phosphate synthase (301 aa).

This sequence belongs to the TrpC family.

The catalysed reaction is 1-(2-carboxyphenylamino)-1-deoxy-D-ribulose 5-phosphate + H(+) = (1S,2R)-1-C-(indol-3-yl)glycerol 3-phosphate + CO2 + H2O. It participates in amino-acid biosynthesis; L-tryptophan biosynthesis; L-tryptophan from chorismate: step 4/5. The protein is Indole-3-glycerol phosphate synthase of Prochlorococcus marinus (strain MIT 9313).